Here is a 330-residue protein sequence, read N- to C-terminus: Phenylalanine--tRNA ligase alpha subunit (330 aa).

Glu246 is a Mg(2+) binding site.

The protein belongs to the class-II aminoacyl-tRNA synthetase family. Phe-tRNA synthetase alpha subunit type 1 subfamily. Tetramer of two alpha and two beta subunits. Mg(2+) is required as a cofactor.

Its subcellular location is the cytoplasm. It catalyses the reaction tRNA(Phe) + L-phenylalanine + ATP = L-phenylalanyl-tRNA(Phe) + AMP + diphosphate + H(+). This chain is Phenylalanine--tRNA ligase alpha subunit, found in Sulfurovum sp. (strain NBC37-1).